The chain runs to 250 residues: Biosynthetic peptidoglycan transglycosylase (250 aa).

The chain crosses the membrane as a helical span at residues 15–35 (AVLLFFVSSLGFVLLYRFVPV).

Belongs to the glycosyltransferase 51 family.

It is found in the cell inner membrane. The catalysed reaction is [GlcNAc-(1-&gt;4)-Mur2Ac(oyl-L-Ala-gamma-D-Glu-L-Lys-D-Ala-D-Ala)](n)-di-trans,octa-cis-undecaprenyl diphosphate + beta-D-GlcNAc-(1-&gt;4)-Mur2Ac(oyl-L-Ala-gamma-D-Glu-L-Lys-D-Ala-D-Ala)-di-trans,octa-cis-undecaprenyl diphosphate = [GlcNAc-(1-&gt;4)-Mur2Ac(oyl-L-Ala-gamma-D-Glu-L-Lys-D-Ala-D-Ala)](n+1)-di-trans,octa-cis-undecaprenyl diphosphate + di-trans,octa-cis-undecaprenyl diphosphate + H(+). It functions in the pathway cell wall biogenesis; peptidoglycan biosynthesis. Its function is as follows. Peptidoglycan polymerase that catalyzes glycan chain elongation from lipid-linked precursors. This Bdellovibrio bacteriovorus (strain ATCC 15356 / DSM 50701 / NCIMB 9529 / HD100) protein is Biosynthetic peptidoglycan transglycosylase.